The primary structure comprises 492 residues: Gamma-aminobutyric acid receptor subunit alpha-3 (492 aa).

The signal sequence occupies residues 1-28 (MIITQMSQFYMAGLGLLFLINILPGTTG). Residues 29-274 (QVESRRQEPG…MTTHFHLKRK (246 aa)) are Extracellular-facing. N-linked (GlcNAc...) asparagine glycosylation occurs at Asn63. Arg119 is a binding site for 4-aminobutanoate. 2 N-linked (GlcNAc...) asparagine glycosylation sites follow: Asn163 and Asn176. Position 182 (Thr182) interacts with 4-aminobutanoate. Cys191 and Cys205 form a disulfide bridge. A glycan (N-linked (GlcNAc...) asparagine) is linked at Asn228. A helical membrane pass occupies residues 275 to 295 (IGYFVIQTYLPCIMTVILSQV). The Cytoplasmic portion of the chain corresponds to 296–305 (SFWLNRESVP). The chain crosses the membrane as a helical span at residues 306–325 (ARTVFGVTTVLTMTTLSISA). The Extracellular portion of the chain corresponds to 326–336 (RNSLPKVAYAT). Residues 337-357 (AMDWFMAVCYAFVFSALIEFA) form a helical membrane-spanning segment. The Cytoplasmic segment spans residues 358–457 (TVNYFTKRSW…TYNSVSKVDK (100 aa)). Ser426 is subject to Phosphoserine. Thr427 is modified (phosphothreonine). Ser433 is subject to Phosphoserine. A helical transmembrane segment spans residues 458–478 (ISRIIFPVLFAIFNLVYWATY). Topologically, residues 479–492 (VNRESAIKGMIRKQ) are extracellular.

This sequence belongs to the ligand-gated ion channel (TC 1.A.9) family. Gamma-aminobutyric acid receptor (TC 1.A.9.5) subfamily. GABRA3 sub-subfamily. As to quaternary structure, heteropentamer, formed by a combination of alpha (GABRA1-6), beta (GABRB1-3), gamma (GABRG1-3), delta (GABRD), epsilon (GABRE), rho (GABRR1-3), pi (GABRP) and theta (GABRQ) chains, each subunit exhibiting distinct physiological and pharmacological properties. Binds UBQLN1. Interacts with GPHN.

The protein resides in the postsynaptic cell membrane. It localises to the cell membrane. It catalyses the reaction chloride(in) = chloride(out). Alpha subunit of the heteropentameric ligand-gated chloride channel gated by gamma-aminobutyric acid (GABA), a major inhibitory neurotransmitter in the brain. GABA-gated chloride channels, also named GABA(A) receptors (GABAAR), consist of five subunits arranged around a central pore and contain GABA active binding site(s) located at the alpha and beta subunit interface(s). When activated by GABA, GABAARs selectively allow the flow of chloride anions across the cell membrane down their electrochemical gradient. Chloride influx into the postsynaptic neuron following GABAAR opening decreases the neuron ability to generate a new action potential, thereby reducing nerve transmission. This chain is Gamma-aminobutyric acid receptor subunit alpha-3 (GABRA3), found in Bos taurus (Bovine).